Consider the following 413-residue polypeptide: Phosphopentomutase (413 aa).

Mn(2+) is bound by residues Asp11, Asp306, His311, Asp347, His348, and His359.

This sequence belongs to the phosphopentomutase family. Requires Mn(2+) as cofactor.

It localises to the cytoplasm. It carries out the reaction 2-deoxy-alpha-D-ribose 1-phosphate = 2-deoxy-D-ribose 5-phosphate. The catalysed reaction is alpha-D-ribose 1-phosphate = D-ribose 5-phosphate. The protein operates within carbohydrate degradation; 2-deoxy-D-ribose 1-phosphate degradation; D-glyceraldehyde 3-phosphate and acetaldehyde from 2-deoxy-alpha-D-ribose 1-phosphate: step 1/2. In terms of biological role, isomerase that catalyzes the conversion of deoxy-ribose 1-phosphate (dRib-1-P) and ribose 1-phosphate (Rib-1-P) to deoxy-ribose 5-phosphate (dRib-5-P) and ribose 5-phosphate (Rib-5-P), respectively. The sequence is that of Phosphopentomutase from Helicobacter pylori (strain J99 / ATCC 700824) (Campylobacter pylori J99).